The sequence spans 87 residues: Small ribosomal subunit protein uS15c (87 aa).

It belongs to the universal ribosomal protein uS15 family. As to quaternary structure, part of the 30S ribosomal subunit.

Its subcellular location is the plastid. It localises to the chloroplast. This chain is Small ribosomal subunit protein uS15c (rps15), found in Illicium oligandrum (Star anise).